The following is a 210-amino-acid chain: ATP-dependent Clp protease proteolytic subunit (210 aa).

Residue serine 114 is the Nucleophile of the active site. Residue histidine 139 is part of the active site.

The protein belongs to the peptidase S14 family. In terms of assembly, fourteen ClpP subunits assemble into 2 heptameric rings which stack back to back to give a disk-like structure with a central cavity, resembling the structure of eukaryotic proteasomes.

The protein resides in the cytoplasm. It catalyses the reaction Hydrolysis of proteins to small peptides in the presence of ATP and magnesium. alpha-casein is the usual test substrate. In the absence of ATP, only oligopeptides shorter than five residues are hydrolyzed (such as succinyl-Leu-Tyr-|-NHMec, and Leu-Tyr-Leu-|-Tyr-Trp, in which cleavage of the -Tyr-|-Leu- and -Tyr-|-Trp bonds also occurs).. Its function is as follows. Cleaves peptides in various proteins in a process that requires ATP hydrolysis. Has a chymotrypsin-like activity. Plays a major role in the degradation of misfolded proteins. The chain is ATP-dependent Clp protease proteolytic subunit from Janthinobacterium sp. (strain Marseille) (Minibacterium massiliensis).